We begin with the raw amino-acid sequence, 605 residues long: Meiosis-specific protein HOP1 (605 aa).

The region spanning 20–250 is the HORMA domain; it reads EQSQKLLQTM…TKHHKVALSV (231 aa). A zinc finger spans residues 348-364; sequence CKSCRKTLHGICYGNFL.

Its subcellular location is the nucleus. The protein resides in the chromosome. In terms of biological role, probable constituent of the synaptonemal complex during meiosis. May interact with RED1. This Saccharomyces cerevisiae (strain ATCC 204508 / S288c) (Baker's yeast) protein is Meiosis-specific protein HOP1 (HOP1).